We begin with the raw amino-acid sequence, 338 residues long: Methionine import ATP-binding protein MetN 2 (338 aa).

One can recognise an ABC transporter domain in the interval 2 to 242; that stretch reads IEIEKVCVDF…PQHAFTQQLV (241 aa). An ATP-binding site is contributed by 39–46; sequence GTSGAGKS.

Belongs to the ABC transporter superfamily. Methionine importer (TC 3.A.1.24) family. In terms of assembly, the complex is composed of two ATP-binding proteins (MetN), two transmembrane proteins (MetI) and a solute-binding protein (MetQ).

The protein localises to the cell inner membrane. The catalysed reaction is L-methionine(out) + ATP + H2O = L-methionine(in) + ADP + phosphate + H(+). It catalyses the reaction D-methionine(out) + ATP + H2O = D-methionine(in) + ADP + phosphate + H(+). Functionally, part of the ABC transporter complex MetNIQ involved in methionine import. Responsible for energy coupling to the transport system. This chain is Methionine import ATP-binding protein MetN 2, found in Salmonella typhimurium (strain LT2 / SGSC1412 / ATCC 700720).